The following is a 273-amino-acid chain: Protein FAM210A (273 aa).

The tract at residues 95-116 (VLSSSSTSQETPSEKKEEPDPL) is disordered. Residues 106-116 (PSEKKEEPDPL) are compositionally biased toward basic and acidic residues. Positions 118-230 (DKSISLYQRF…GYMSTPPPVK (113 aa)) constitute a DUF1279 domain. Residues 138–158 (LIPVHLITSGIWFGTFYYASI) traverse the membrane as a helical segment. A coiled-coil region spans residues 233-272 (LQGRMEETKELISEKMEETKDRLTEKLQETKEKVSFKKKV). A disordered region spans residues 247-273 (KMEETKDRLTEKLQETKEKVSFKKKVE).

The protein belongs to the FAM210 family. As to quaternary structure, interacts with ATAD3A.

It localises to the membrane. It is found in the mitochondrion. The protein resides in the cytoplasm. Its function is as follows. May play a role in the structure and strength of both muscle and bone. This Rattus norvegicus (Rat) protein is Protein FAM210A (Fam210a).